Here is a 205-residue protein sequence, read N- to C-terminus: ATP-dependent dethiobiotin synthetase BioD (205 aa).

Threonine 16 contributes to the Mg(2+) binding site. The active site involves lysine 32. Threonine 36 contacts substrate. Glutamate 97 serves as a coordination point for Mg(2+). 97-100 contacts ATP; sequence EGAG.

This sequence belongs to the dethiobiotin synthetase family. As to quaternary structure, homodimer. Mg(2+) serves as cofactor.

It localises to the cytoplasm. The enzyme catalyses (7R,8S)-7,8-diammoniononanoate + CO2 + ATP = (4R,5S)-dethiobiotin + ADP + phosphate + 3 H(+). Its pathway is cofactor biosynthesis; biotin biosynthesis; biotin from 7,8-diaminononanoate: step 1/2. Functionally, catalyzes a mechanistically unusual reaction, the ATP-dependent insertion of CO2 between the N7 and N8 nitrogen atoms of 7,8-diaminopelargonic acid (DAPA, also called 7,8-diammoniononanoate) to form a ureido ring. This Paramagnetospirillum magneticum (strain ATCC 700264 / AMB-1) (Magnetospirillum magneticum) protein is ATP-dependent dethiobiotin synthetase BioD.